The following is a 793-amino-acid chain: Neurobeachin (793 aa).

2 disordered regions span residues 68–92 (ENIKKGKKGNVSTISGLSSQTTGAK) and 685–793 (RETA…EILK). Polar residues-rich tracts occupy residues 77–90 (NVSTISGLSSQTTG), 689–710 (RSGSQAGRNIRQEINSPTSTET), 750–762 (NILNGTDLETSTG), and 782–793 (ESLTESPSEILK).

This sequence belongs to the WD repeat neurobeachin family. As to quaternary structure, interacts with RII subunit of PKA. As to expression, forebrain and cerebellum.

Its subcellular location is the cytoplasm. It localises to the membrane. Binds to type II regulatory subunits of protein kinase A and anchors/targets them to the membrane. May anchor the kinase to cytoskeletal and/or organelle-associated proteins. This is Neurobeachin (NBEA) from Gallus gallus (Chicken).